Reading from the N-terminus, the 409-residue chain is MKAEILCVGTELLLGDIVNTNAQYISKELANMGIEVYHHSVIGDNEDRLLKELERAFNYCDLVITTGGLGPTKDDLTKESVAKFFQEDLILHEKSLKQIEKRLSCFNKSMTESNKKQAYFPKNCEILENPNGTAPGFIIEKDNKIAVILPGPPYEMQPMFENKVIPYLEKLTNSTIKSKVLRITGIGESDVADLISDILENQTNPTVAPYAKQGETTLRITAKANSEEKALSLIVPIEKKIRQILGTNIYGSGETSLEEVVANMLVKRNLTIATAESCTGGLLAGKLISFPGISSVFLEGAITYSNESKINRLNVKKETLEKYTAVSKEVALEMAEGIAKSAGTNIGISTTGVAGPSGGTYDKPIGLIYIGLYINGKTSVKELNYSGSRQFIRNITVTRALDFLRKNLI.

This sequence belongs to the CinA family.

The protein is Putative competence-damage inducible protein of Clostridium botulinum (strain Loch Maree / Type A3).